A 492-amino-acid chain; its full sequence is Proline--tRNA ligase (492 aa).

Belongs to the class-II aminoacyl-tRNA synthetase family. ProS type 3 subfamily. As to quaternary structure, homodimer.

Its subcellular location is the cytoplasm. It catalyses the reaction tRNA(Pro) + L-proline + ATP = L-prolyl-tRNA(Pro) + AMP + diphosphate. In terms of biological role, catalyzes the attachment of proline to tRNA(Pro) in a two-step reaction: proline is first activated by ATP to form Pro-AMP and then transferred to the acceptor end of tRNA(Pro). This Christiangramia forsetii (strain DSM 17595 / CGMCC 1.15422 / KT0803) (Gramella forsetii) protein is Proline--tRNA ligase.